The chain runs to 71 residues: Protein SlyX homolog (71 aa).

It belongs to the SlyX family.

The protein is Protein SlyX homolog of Rhodopseudomonas palustris (strain BisB5).